A 352-amino-acid chain; its full sequence is Uroporphyrinogen decarboxylase (352 aa).

Residues 26–30 (RQAGR), D76, Y153, S208, and H323 contribute to the substrate site.

Belongs to the uroporphyrinogen decarboxylase family. In terms of assembly, homodimer.

Its subcellular location is the cytoplasm. It catalyses the reaction uroporphyrinogen III + 4 H(+) = coproporphyrinogen III + 4 CO2. It participates in porphyrin-containing compound metabolism; protoporphyrin-IX biosynthesis; coproporphyrinogen-III from 5-aminolevulinate: step 4/4. Its function is as follows. Catalyzes the decarboxylation of four acetate groups of uroporphyrinogen-III to yield coproporphyrinogen-III. In Prochlorococcus marinus (strain NATL2A), this protein is Uroporphyrinogen decarboxylase.